The chain runs to 275 residues: MAVKNYKPTSPGRRFVTFSDFSEITKVEPEKSLLEPIKKTGGRNAQGRLTVRHQGGGHKRMFRIIDFKRNKDGIPAKVASIEYDPNRSARIALLNYADGEKRYILAPVGLEVGVIVESGPDADIKVGNCLPLRNIPVGTMVHNIELYPGAGAQMVRSAGAAAQLMAKEGKYANLRLPSGEMRLVLQECRATIGQVGNLEHENVTIGKAGRSRHLGIRPTVRGKVMNPVDHPHGGGEGRNPIGRNPSTPWGKLAMGVKTRGNKKSDRLIVKRRNKK.

The tract at residues 222–275 (GKVMNPVDHPHGGGEGRNPIGRNPSTPWGKLAMGVKTRGNKKSDRLIVKRRNKK) is disordered.

Belongs to the universal ribosomal protein uL2 family. Part of the 50S ribosomal subunit. Forms a bridge to the 30S subunit in the 70S ribosome.

Functionally, one of the primary rRNA binding proteins. Required for association of the 30S and 50S subunits to form the 70S ribosome, for tRNA binding and peptide bond formation. It has been suggested to have peptidyltransferase activity; this is somewhat controversial. Makes several contacts with the 16S rRNA in the 70S ribosome. This chain is Large ribosomal subunit protein uL2, found in Desulforamulus reducens (strain ATCC BAA-1160 / DSM 100696 / MI-1) (Desulfotomaculum reducens).